A 175-amino-acid chain; its full sequence is MMYIVFIMSVLYVVGFIGFSSKPSPVYGGMSLVVSGGLGCGIIMSSGGSFLGLVVFLVYLGGMMVVFGYTIAMATEEYPETWGSNVVVLSAFLVGLLMEVFMVVWLFSGEHELVGFYFGGLESFVTLGEGGFEYVREDYSGGASLYSCGFWFLAMAGWMLFVSIFIATEITRKRY.

The next 6 membrane-spanning stretches (helical) occupy residues 1 to 21, 24 to 44, 51 to 71, 87 to 107, 112 to 132, and 148 to 168; these read MMYI…GFSS, SPVY…GIIM, LGLV…GYTI, VVLS…VWLF, ELVG…EGGF, and CGFW…FIAT.

Belongs to the complex I subunit 6 family. As to quaternary structure, core subunit of respiratory chain NADH dehydrogenase (Complex I) which is composed of 45 different subunits.

It localises to the mitochondrion inner membrane. The enzyme catalyses a ubiquinone + NADH + 5 H(+)(in) = a ubiquinol + NAD(+) + 4 H(+)(out). Core subunit of the mitochondrial membrane respiratory chain NADH dehydrogenase (Complex I) which catalyzes electron transfer from NADH through the respiratory chain, using ubiquinone as an electron acceptor. Essential for the catalytic activity and assembly of complex I. The sequence is that of NADH-ubiquinone oxidoreductase chain 6 (MT-ND6) from Elephas maximus (Indian elephant).